The sequence spans 148 residues: Large ribosomal subunit protein uL15 (148 aa).

Residues 1 to 30 (MPSRLRKTRKLRGHVSHGHGRIGKHRKHPG) show a composition bias toward basic residues. A disordered region spans residues 1–39 (MPSRLRKTRKLRGHVSHGHGRIGKHRKHPGGRGNAGGLH). His-39 bears the (3S)-3-hydroxyhistidine mark. N6-acetyllysine occurs at positions 47 and 55. Ser-68 carries the phosphoserine modification. Position 110 is an N6-acetyllysine (Lys-110).

The protein belongs to the universal ribosomal protein uL15 family. As to quaternary structure, component of the large ribosomal subunit. Hydroxylated on His-39 by MINA.

It localises to the cytoplasm. In terms of biological role, component of the large ribosomal subunit. The ribosome is a large ribonucleoprotein complex responsible for the synthesis of proteins in the cell. This chain is Large ribosomal subunit protein uL15 (RPL27A), found in Macaca fascicularis (Crab-eating macaque).